The chain runs to 334 residues: N-acetyl-gamma-glutamyl-phosphate reductase (334 aa).

Residue C154 is part of the active site.

Belongs to the NAGSA dehydrogenase family. Type 1 subfamily.

Its subcellular location is the cytoplasm. The enzyme catalyses N-acetyl-L-glutamate 5-semialdehyde + phosphate + NADP(+) = N-acetyl-L-glutamyl 5-phosphate + NADPH + H(+). It functions in the pathway amino-acid biosynthesis; L-arginine biosynthesis; N(2)-acetyl-L-ornithine from L-glutamate: step 3/4. In terms of biological role, catalyzes the NADPH-dependent reduction of N-acetyl-5-glutamyl phosphate to yield N-acetyl-L-glutamate 5-semialdehyde. In Pectobacterium carotovorum subsp. carotovorum (strain PC1), this protein is N-acetyl-gamma-glutamyl-phosphate reductase.